Here is a 430-residue protein sequence, read N- to C-terminus: Tol-Pal system protein TolB (430 aa).

The first 26 residues, 1 to 26, serve as a signal peptide directing secretion; that stretch reads MSLMTKLGLRALVASCLIAAGGAAHA.

The protein belongs to the TolB family. The Tol-Pal system is composed of five core proteins: the inner membrane proteins TolA, TolQ and TolR, the periplasmic protein TolB and the outer membrane protein Pal. They form a network linking the inner and outer membranes and the peptidoglycan layer.

The protein resides in the periplasm. Functionally, part of the Tol-Pal system, which plays a role in outer membrane invagination during cell division and is important for maintaining outer membrane integrity. This is Tol-Pal system protein TolB from Paraburkholderia phymatum (strain DSM 17167 / CIP 108236 / LMG 21445 / STM815) (Burkholderia phymatum).